The chain runs to 1520 residues: Glutamate synthase [NADPH] large chain (1520 aa).

The For GATase activity role is filled by Cys22. Residues 22–415 (CGIGLYAHLK…PGKMLLIDLE (394 aa)) enclose the Glutamine amidotransferase type-2 domain. The interval 890–913 (GGKSNSGEGGEDPKRFVPDENGDD) is disordered. The segment covering 900–913 (EDPKRFVPDENGDD) has biased composition (basic and acidic residues). 1060-1112 (LAEAHQTLMLNGLRDRVVLETDGKLMTGRDVVMAALLGAEEFGFATAPLVVLG) provides a ligand contact to FMN. Residues Cys1113, Cys1119, and Cys1124 each contribute to the [3Fe-4S] cluster site.

Belongs to the glutamate synthase family. As to quaternary structure, aggregate of 4 catalytic active heterodimers, consisting of a large and a small subunit. It depends on [3Fe-4S] cluster as a cofactor. Requires FAD as cofactor. FMN is required as a cofactor.

The catalysed reaction is 2 L-glutamate + NADP(+) = L-glutamine + 2-oxoglutarate + NADPH + H(+). Its pathway is amino-acid biosynthesis; L-glutamate biosynthesis via GLT pathway; L-glutamate from 2-oxoglutarate and L-glutamine (NADP(+) route): step 1/1. It participates in energy metabolism; nitrogen metabolism. The chain is Glutamate synthase [NADPH] large chain (gltA) from Bacillus subtilis (strain 168).